A 336-amino-acid chain; its full sequence is MARVYADVNQNMPRAYWDYDSVNISWGVLENYEVVRKIGRGKYSEVFEGINVVNYQKCVIKVLKPVKKKKIKREIKILQNLAGGPNIVALLDVVRDSQSKTPSLIFEYVNNTEFRTLYPRFNDFDVRYYIFELLKALDFCHSKGIMHRDVKPHNVMIDHENRKLRLIDWGLAEFYHPGTEYNVRVASRYFKGPELLVDFQEYDYSLDMWSLGAMFASMIFRKEPFFHGQSNSDQLVKIAKVLGTDELFDYLDKYEIELDAQYDDILGRFQRKPWHSFINAENQRFVSNEAIDFLDKLLRYDHNERLTAKEAMAHPYFAPVRDEATRARYLAGETIN.

Residues 32 to 317 (YEVVRKIGRG…AKEAMAHPYF (286 aa)) form the Protein kinase domain. Residues 38–46 (IGRGKYSEV) and Lys-61 each bind ATP. The active-site Proton acceptor is the Asp-149.

This sequence belongs to the protein kinase superfamily. Ser/Thr protein kinase family. CK2 subfamily. In terms of assembly, tetramer composed of two alpha chains, one beta chain and one beta' chain.

The catalysed reaction is L-seryl-[protein] + ATP = O-phospho-L-seryl-[protein] + ADP + H(+). It carries out the reaction L-threonyl-[protein] + ATP = O-phospho-L-threonyl-[protein] + ADP + H(+). Functionally, catalytic subunit of a constitutively active serine/threonine-protein kinase complex that phosphorylates a large number of substrates containing acidic residues C-terminal to the phosphorylated serine or threonine. Phosphorylates the frq clock protein thus regulating the circadian clock. The sequence is that of Casein kinase II subunit alpha (cka) from Neurospora crassa (strain ATCC 24698 / 74-OR23-1A / CBS 708.71 / DSM 1257 / FGSC 987).